Consider the following 1500-residue polypeptide: MVATFNPAVGSHVWVEDPDEAWLDGEVVEINGDQIKVLCASGKQVVVKDSNIYPKDVEAPASGVEDMTRLAYLHEPGVLQNLQSRYDINEIYTYTGSILIAVNPFRRLPHLYSSHMMTQYKGASLGELSPHPFAVADAAYRQMVNEGVSQSILVSGESGAGKTESTKLLMRYLAFMGGRGAATEGRTVEQKVLESNPVLEAFGNAKTVKNNNSSRFGKFVEIQFDQSGRISGAAIRTYLLERSRVCQVSDPERNYHCFYMLCAAPEEDAKKFKLGDPKIYHYLNQSKCIQLDAMNDAEEYHATKKAMDVVGISSEEQDAIFRVVASILHLGNIEFAKGTEIDSSIPRDEKSWFHLKTAAELLMCNEKSLEDSLCKRIMATRDETITKTLDPEAALLSRDALAKVMYSRLFDWLVEKINTSIGQDPDSKYLIGVLDIYGFESFKTNSFEQFCINLTNEKLQQHFNQHVFKMEQEEYKKEEINWSYIEFVDNQDILDLIEKKPGGIIALLDEACMFPRSTHETFAQKLYQTYKNHKRFTKPKLARSDFTICHYAGDVTYQTELFLDKNKDYVIAEHQALLNASTCSFVANLFPPVSDDSKQSKFSSIGTRFKQQLVSLLEILNTTEPHYIRCIKPNNLLKPGIFENQNVLQQLRCGGVMEAIRISCAGYPTRKHFDEFLNRFGIIAPQVLDKNSNEPAACKKLLDKAGLEGYQIGKSKVFLRAGQMADLDTRRTEILGRSASIIQRKVRSYLAQKTFIQLRISATQIQAVCRGYLARSIYEGMRREAAALKIQRDLRKFLARKAYTELFSATILIQAGMRGMVSRKELCLRRQTKAATIIQTRCRVYLARLHYRKLKKAAITTQCAWRGKVARKELKNLKMAARETGALQEAKNKLEKQVEELTWRLQLEKRMRTDLEEAKKQENAKYESSLEEIQNKFKETEALLIKEREAAKTVSEVLPIIKEVPVVDQELMEKLTNENEKLKGMVSSLEIKIDETAKELHETARISQDRLKQALAAESKVAKLKTAMQRLEEKISDMETEKQIMLQQTILNTPVKSVAGHPPTATIKNLENGHRTNLENQFNEVEVNGNAGKSAAERQLENVDTLIDCVKENIGFSNGKPIAAFTIYKCLLHWKCFESEKTSAFDRLIEMIGSAIENEDDNGHLAYWLTNTSALLFLLQKSLKPAGAGATASKKPPITTSLFGRMALSFRSSPNLAAAAEAAALAVIRPVEAKYPALLFKQQLAAYVEKIFGMIRDNLKKELSALISMCIQAPRISKGGIQRSARSLGKDSPAIHWQSIIDGLNSLLAILKDNYVPLVLIQKIHTQTFSFVNVQLFNSLLLRKECCTFSNGEFVKSGLAELELWCGQVNEYAGPSWDELKHIRQAVGFLVIHQKYRVSYDDIVHDLCPILSVQQLYRICTLYWDDCYNTRSVSQEVISSMRALMTEESNDADSNSFLLDDNSSIPFSIDEISNSMHEKDFASVKPAKELLENPEFVFLH.

In terms of domain architecture, Myosin N-terminal SH3-like spans 8–57 (AVGSHVWVEDPDEAWLDGEVVEINGDQIKVLCASGKQVVVKDSNIYPKDV). One can recognise a Myosin motor domain in the interval 62 to 732 (SGVEDMTRLA…QMADLDTRRT (671 aa)). Residues 156–163 (GESGAGKT) and 210–218 (NNNSSRFGK) each bind ATP. Actin-binding stretches follow at residues 496–530 (LIEK…YQTY), 532–555 (NHKR…AGDV), 590–613 (FPPV…KQQL), and 613–635 (LVSL…KPNN). IQ domains follow at residues 735-764 (LGRS…SATQ), 758-787 (LRIS…EAAA), 783-812 (REAA…ATIL), 806-835 (LFSA…TKAA), 831-860 (QTKA…AAIT), and 854-883 (LKKA…AARE). Positions 884–1049 (TGALQEAKNK…TEKQIMLQQT (166 aa)) form a coiled coil. One can recognise a Dilute domain in the interval 1146-1447 (DRLIEMIGSA…ISSMRALMTE (302 aa)).

It belongs to the TRAFAC class myosin-kinesin ATPase superfamily. Myosin family. Plant myosin class XI subfamily. Homodimer.

Its subcellular location is the cytoplasm. Functionally, myosin heavy chain that is required for the cell cycle-regulated transport of various organelles and proteins for their segregation. Functions by binding with its tail domain to receptor proteins on organelles and exerting force with its N-terminal motor domain against actin filaments, thereby transporting its cargo along polarized actin cables. The protein is Myosin-8 (XI-B) of Arabidopsis thaliana (Mouse-ear cress).